The chain runs to 114 residues: T cell receptor beta variable 25-1 (114 aa).

The N-terminal stretch at 1-21 is a signal peptide; sequence MTIRLLCYVGFYFLGAGLMEA. Residues 22–114 form the Ig-like domain; that stretch reads DIYQTPRYLV…TSQYLCASSE (93 aa). An intrachain disulfide couples cysteine 42 to cysteine 110. N-linked (GlcNAc...) asparagine glycosylation occurs at asparagine 72.

In terms of assembly, alpha-beta TR is a heterodimer composed of an alpha and beta chain; disulfide-linked. The alpha-beta TR is associated with the transmembrane signaling CD3 coreceptor proteins to form the TR-CD3 (TcR or TCR). The assembly of alpha-beta TR heterodimers with CD3 occurs in the endoplasmic reticulum where a single alpha-beta TR heterodimer associates with one CD3D-CD3E heterodimer, one CD3G-CD3E heterodimer and one CD247 homodimer forming a stable octameric structure. CD3D-CD3E and CD3G-CD3E heterodimers preferentially associate with TR alpha and TR beta chains, respectively. The association of the CD247 homodimer is the last step of TcR assembly in the endoplasmic reticulum and is required for transport to the cell surface.

Its subcellular location is the cell membrane. V region of the variable domain of T cell receptor (TR) beta chain that participates in the antigen recognition. Alpha-beta T cell receptors are antigen specific receptors which are essential to the immune response and are present on the cell surface of T lymphocytes. Recognize peptide-major histocompatibility (MH) (pMH) complexes that are displayed by antigen presenting cells (APC), a prerequisite for efficient T cell adaptive immunity against pathogens. Binding of alpha-beta TR to pMH complex initiates TR-CD3 clustering on the cell surface and intracellular activation of LCK that phosphorylates the ITAM motifs of CD3G, CD3D, CD3E and CD247 enabling the recruitment of ZAP70. In turn ZAP70 phosphorylates LAT, which recruits numerous signaling molecules to form the LAT signalosome. The LAT signalosome propagates signal branching to three major signaling pathways, the calcium, the mitogen-activated protein kinase (MAPK) kinase and the nuclear factor NF-kappa-B (NF-kB) pathways, leading to the mobilization of transcription factors that are critical for gene expression and essential for T cell growth and differentiation. The T cell repertoire is generated in the thymus, by V-(D)-J rearrangement. This repertoire is then shaped by intrathymic selection events to generate a peripheral T cell pool of self-MH restricted, non-autoaggressive T cells. Post-thymic interaction of alpha-beta TR with the pMH complexes shapes TR structural and functional avidity. This Homo sapiens (Human) protein is T cell receptor beta variable 25-1.